We begin with the raw amino-acid sequence, 617 residues long: Hemagglutinin glycoprotein (617 aa).

The Intravirion segment spans residues 1–37; it reads MSPQRDRINAFDKDNPHPXXXXXXXXXXXXXXXRPYV. Positions 1–154 are stalk; sequence MSPQRDRINA…RIKLDYDQYC (154 aa). A helical; Signal-anchor for type II membrane protein membrane pass occupies residues 38–58; sequence LLAVLFVMFLSLIGLLAIAGI. Residues 59–617 lie on the Virion surface side of the membrane; it reads RFHRAAIYTA…VTREDGTNCR (559 aa). Residues Asn168, Asn187, Asn200, Asn215, and Asn238 are each glycosylated (N-linked (GlcNAc...) asparagine; by host). 5 disulfide bridges follow: Cys188/Cys606, Cys287/Cys300, Cys381/Cys494, Cys386/Cys394, and Cys570/Cys579. Positions 458–543 are interaction with host NECTIN4 receptor; the sequence is PMKSLALGVV…VEHAVVYYVY (86 aa).

It belongs to the paramyxoviruses hemagglutinin-neuraminidase family. Non-sialidase subfamily. Homodimer; disulfide-linked. Further forms homotetramer (dimer of dimers). Interacts (via C-terminus) with human NECTIN4 (via N-terminus); this interaction allows attachment to the respiratory epithelium and viral entry. Interacts (via C-terminus) with human SLAMF1/CD150 (via N-terminus); this interaction allows attachment and viral entry into the CD150-expressing immune cells.

The protein localises to the virion membrane. It is found in the host cell membrane. Attaches the virus to the human SLAMF1/CD150 receptor for entry into host dendritic cells, macrophages, activated memory T cells and naive or memory B cells, thereby explaining the long immunosuppression that follows infection. In the respiratory airways, binds to the NECTIN4 receptor for entry into the host cell. Binding of H protein to the receptor induces a conformational change that allows the F protein to trigger virion/cell membranes fusion. The vaccine and laboratory-adapted strains use host CD46 as an alternate receptor. The high degree of interaction between H and CD46 results in down-regulation of the latter from the surface of infected cells, rendering them more sensitive to c3b-mediated complement lysis. This is Hemagglutinin glycoprotein (H) from Homo sapiens (Human).